Reading from the N-terminus, the 452-residue chain is Phosphoglucosamine mutase (452 aa).

Catalysis depends on S108, which acts as the Phosphoserine intermediate. Residues S108, D247, D249, and D251 each contribute to the Mg(2+) site. Phosphoserine is present on S108.

The protein belongs to the phosphohexose mutase family. The cofactor is Mg(2+). Activated by phosphorylation.

It carries out the reaction alpha-D-glucosamine 1-phosphate = D-glucosamine 6-phosphate. Catalyzes the conversion of glucosamine-6-phosphate to glucosamine-1-phosphate. This Burkholderia pseudomallei (strain K96243) protein is Phosphoglucosamine mutase.